Consider the following 169-residue polypeptide: Putative lipocalin R877 (169 aa).

The signal sequence occupies residues 1 to 18 (MWIIILIVIIVIITIIFS).

The protein belongs to the calycin superfamily. Lipocalin family.

Its subcellular location is the secreted. It localises to the virion. Functionally, could play a role in the transport of a small ligand. This chain is Putative lipocalin R877, found in Acanthamoeba polyphaga mimivirus (APMV).